The sequence spans 284 residues: L-ribulose-5-phosphate 3-epimerase UlaE (284 aa).

The protein belongs to the L-ribulose-5-phosphate 3-epimerase family.

The enzyme catalyses L-ribulose 5-phosphate = L-xylulose 5-phosphate. It functions in the pathway cofactor degradation; L-ascorbate degradation; D-xylulose 5-phosphate from L-ascorbate: step 3/4. Its function is as follows. Catalyzes the isomerization of L-xylulose-5-phosphate to L-ribulose-5-phosphate. Is involved in the anaerobic L-ascorbate utilization. The chain is L-ribulose-5-phosphate 3-epimerase UlaE from Escherichia coli (strain SMS-3-5 / SECEC).